Reading from the N-terminus, the 307-residue chain is Small ribosomal subunit biogenesis GTPase RsgA (307 aa).

The 158-residue stretch at 80–237 (KVDLRQAIVS…IVDTPGIKEF (158 aa)) folds into the CP-type G domain. Residues 129–132 (NKID) and 180–188 (GQSGVGKSS) contribute to the GTP site. 4 residues coordinate Zn(2+): cysteine 261, cysteine 266, histidine 268, and cysteine 274.

This sequence belongs to the TRAFAC class YlqF/YawG GTPase family. RsgA subfamily. As to quaternary structure, monomer. Associates with 30S ribosomal subunit, binds 16S rRNA. It depends on Zn(2+) as a cofactor.

It localises to the cytoplasm. Functionally, one of several proteins that assist in the late maturation steps of the functional core of the 30S ribosomal subunit. Helps release RbfA from mature subunits. May play a role in the assembly of ribosomal proteins into the subunit. Circularly permuted GTPase that catalyzes slow GTP hydrolysis, GTPase activity is stimulated by the 30S ribosomal subunit. The protein is Small ribosomal subunit biogenesis GTPase RsgA of Borrelia garinii subsp. bavariensis (strain ATCC BAA-2496 / DSM 23469 / PBi) (Borreliella bavariensis).